A 24-amino-acid chain; its full sequence is Brevinin-1HSa (24 aa).

The cysteines at positions 18 and 24 are disulfide-linked.

Expressed by the skin glands.

It is found in the secreted. Has antibacterial activity against the Gram-positive bacterium S.aureus ATCC 25923 (MIC=3 uM) and the Gram-negative bacterium E.coli ATCC 25726 (MIC=24 uM). In Odorrana hosii (Hose's rock frog), this protein is Brevinin-1HSa.